Consider the following 617-residue polypeptide: uncharacterized protein (617 aa).

The B12-binding N-terminal domain occupies 33 to 134 (TEDDFRGEKF…FXNATKQKGS (102 aa)). Residues E84, 146-150 (GDVHD), H149, S194, T198, and A251 each bind methylcob(III)alamin. In terms of domain architecture, B12-binding spans 136–272 (NGKVVIATVK…NPEGRAALWE (137 aa)). In terms of domain architecture, AdoMet activation spans 288 to 617 (SKPLRKQLSI…MMKWLGVAMK (330 aa)). S-adenosyl-L-methionine contacts are provided by residues D337, R528, and 583 to 584 (YF).

It belongs to the vitamin-B12 dependent methionine synthase family.

This is an uncharacterized protein from Haemophilus influenzae (strain ATCC 51907 / DSM 11121 / KW20 / Rd).